We begin with the raw amino-acid sequence, 346 residues long: Phosphoribosylformylglycinamidine cyclo-ligase (346 aa).

It belongs to the AIR synthase family.

It localises to the cytoplasm. It carries out the reaction 2-formamido-N(1)-(5-O-phospho-beta-D-ribosyl)acetamidine + ATP = 5-amino-1-(5-phospho-beta-D-ribosyl)imidazole + ADP + phosphate + H(+). It functions in the pathway purine metabolism; IMP biosynthesis via de novo pathway; 5-amino-1-(5-phospho-D-ribosyl)imidazole from N(2)-formyl-N(1)-(5-phospho-D-ribosyl)glycinamide: step 2/2. The sequence is that of Phosphoribosylformylglycinamidine cyclo-ligase from Bacillus cereus (strain ZK / E33L).